The sequence spans 1242 residues: von Willebrand factor A domain-containing protein 5B2 (1242 aa).

The 138-residue stretch at 1 to 138 folds into the VIT domain; it reads MPGLYCPSSW…TMTVTLHSSR (138 aa). Residues 354–527 form the VWFA domain; the sequence is ELLFLLDSSS…KALEPALSDI (174 aa). 6 disordered regions span residues 569–650, 670–726, 751–794, 957–976, 987–1055, and 1118–1159; these read SRPP…SDTA, CSAS…CPLP, LAGR…GQGL, CSSE…SHLD, KGLQ…GSDH, and QGDS…GLGG. Residues 588 to 604 are compositionally biased toward low complexity; that stretch reads PSPEEAPSAASPGTEPT. The segment covering 605–619 has biased composition (polar residues); the sequence is GTSEPLGTGTVSAEL. Residues 681-700 are compositionally biased toward low complexity; it reads TGSSESPGSQGPGSPEGSAP. Over residues 1125 to 1138 the composition is skewed to low complexity; sequence SCSPSPSSGSEGPG.

This chain is von Willebrand factor A domain-containing protein 5B2 (VWA5B2), found in Homo sapiens (Human).